The chain runs to 395 residues: Multidrug resistance protein MdtL (395 aa).

A run of 12 helical transmembrane segments spans residues 4 to 24, 42 to 62, 69 to 89, 93 to 113, 131 to 151, 158 to 178, 217 to 237, 247 to 267, 271 to 291, 295 to 315, 333 to 353, and 358 to 378; these read FLLC…MYLV, IAFS…GKIA, PVAI…SRAS, LFLS…VVAF, LLNG…HLIM, SLFY…LFIL, VSVI…VMGF, ALTA…LGLF, TLML…SLAH, VTLF…GVAM, LGIA…ILGI, and MLIG…FSVA.

This sequence belongs to the major facilitator superfamily. DHA1 family. MdtL (TC 2.A.1.2.22) subfamily.

Its subcellular location is the cell inner membrane. This Salmonella agona (strain SL483) protein is Multidrug resistance protein MdtL.